A 931-amino-acid chain; its full sequence is Ribosome-releasing factor 2, mitochondrial (931 aa).

The tr-type G domain occupies 63-379 (EKTRNIGIIA…AVNNLLPGPS (317 aa)). Residues 72–79 (AHIDAGKT), 162–166 (DTPGH), and 216–219 (NKLD) each bind GTP.

It belongs to the TRAFAC class translation factor GTPase superfamily. Classic translation factor GTPase family. EF-G/EF-2 subfamily.

The protein localises to the mitochondrion. Mitochondrial GTPase that mediates the disassembly of ribosomes from messenger RNA at the termination of mitochondrial protein biosynthesis. Not involved in the GTP-dependent ribosomal translocation step during translation elongation. The sequence is that of Ribosome-releasing factor 2, mitochondrial (mef2) from Talaromyces stipitatus (strain ATCC 10500 / CBS 375.48 / QM 6759 / NRRL 1006) (Penicillium stipitatum).